The sequence spans 1257 residues: LIM domain kinase 1 (1257 aa).

The segment at 1–24 (MHHQQRLRANGGRGGTGLGAGSGP) is disordered. Residues 1–147 (MHHQQRLRAN…ERSKLYCGQC (147 aa)) form an interaction with LATS1 region. Gly residues predominate over residues 11-24 (GGRGGTGLGAGSGP). 2 LIM zinc-binding domains span residues 31–93 (PLCA…RFGD) and 94–154 (ACQQ…RSCQ). In terms of domain architecture, PDZ spans 174 to 274 (LVEIPKDATP…MLQLTVEHDP (101 aa)). Residues 401-686 (LVIGEKLGEG…PCFETLHVWL (286 aa)) enclose the Protein kinase domain. ATP contacts are provided by residues 407 to 415 (LGEGFFGKV) and Lys-430. The active site involves Asp-522. Disordered regions lie at residues 552 to 587 (LPSGNMTPGGYGSGANSDAPMSPSGTLRRSKSRQRR), 759 to 811 (QDIP…ERAL), and 881 to 900 (EELLEESTNKPSNQESQHHR). Over residues 794 to 811 (QEERRNLTPDTESKERAL) the composition is skewed to basic and acidic residues. Ser-1000 carries the phosphoserine modification. 3 disordered regions span residues 1010-1037 (AKQLATPAPKRSKATATTKGGQSSNPPL), 1085-1182 (SAQQ…EKVH), and 1212-1257 (AAGT…NTRC). Polar residues-rich tracts occupy residues 1085 to 1095 (SAQQQRTSSNH) and 1113 to 1125 (RTGSQGIPASNCV). Composition is skewed to low complexity over residues 1126-1137 (SPTRSSRPGSPT) and 1145-1166 (TAATAQRLTNAAATHQQQHQQQ).

The protein belongs to the protein kinase superfamily. TKL Ser/Thr protein kinase family. In terms of assembly, interacts with LATS1, and this interaction inhibits phosphorylation of tsr/cofilin. Post-translationally, phosphorylated on serine and/or threonine residues by ROCK1. Phosphorylated by PAK4 resulting in increased LIMK1 ability to phosphorylate cofilin. May be dephosphorylated and inactivated by SSH1. Expressed throughout the imaginal disks of the eye, leg and wing.

It localises to the cytoplasm. Its subcellular location is the cleavage furrow. It is found in the midbody. The enzyme catalyses L-seryl-[protein] + ATP = O-phospho-L-seryl-[protein] + ADP + H(+). It carries out the reaction L-threonyl-[protein] + ATP = O-phospho-L-threonyl-[protein] + ADP + H(+). Protein kinase which regulates actin filament dynamics. Phosphorylates and inactivates the actin binding/depolymerizing factor tsr/cofilin, thereby stabilizing the actin cytoskeleton. Modulation of actin cytoskeleton dynamics may be essential for imaginal disk morphogenesis and axon guidance. The chain is LIM domain kinase 1 (LIMK1) from Drosophila melanogaster (Fruit fly).